The following is a 366-amino-acid chain: MITLQRTPLFDVYAKYGGKTIDFGGWELPVQFSSIKEEHEAVRTAAGLFDVSHMGEVEVKGVDSLAFLQRVVTNDVSTLKVGGAQYTAMCYENGGTVDDLLIYKRGEEDYLLVINASNIEKDYEWLASHVIGDATVVNVSNEVAQLAIQGPKAEGILQKVVSEDLKEIKFFKFKNDILVDGIPALVSRTGYTGEDGFEIYCKSEDAAKLWEKLLEVGAEEGLKPCGLGARDTLRFEATLPLYGQELSKDITPIEAGIGFAVKPNKEADFFGKATLKEQKENGAPRKLVGIEVIERGIPRTHYPVFIGEEKIGEVTSGTQSPTLKKSIGLALIDVKYAAVDTEVEIEIRNKRVKAVVVPTPFYKRSK.

This sequence belongs to the GcvT family. The glycine cleavage system is composed of four proteins: P, T, L and H.

It carries out the reaction N(6)-[(R)-S(8)-aminomethyldihydrolipoyl]-L-lysyl-[protein] + (6S)-5,6,7,8-tetrahydrofolate = N(6)-[(R)-dihydrolipoyl]-L-lysyl-[protein] + (6R)-5,10-methylene-5,6,7,8-tetrahydrofolate + NH4(+). In terms of biological role, the glycine cleavage system catalyzes the degradation of glycine. This Bacillus cereus (strain ZK / E33L) protein is Aminomethyltransferase.